We begin with the raw amino-acid sequence, 203 residues long: Small ribosomal subunit protein uS4 (203 aa).

The S4 RNA-binding domain maps to 93–154 (RRLDNVVYRC…KSRNLDAVAD (62 aa)).

It belongs to the universal ribosomal protein uS4 family. In terms of assembly, part of the 30S ribosomal subunit. Contacts protein S5. The interaction surface between S4 and S5 is involved in control of translational fidelity.

Its function is as follows. One of the primary rRNA binding proteins, it binds directly to 16S rRNA where it nucleates assembly of the body of the 30S subunit. Functionally, with S5 and S12 plays an important role in translational accuracy. The sequence is that of Small ribosomal subunit protein uS4 from Chlorobaculum tepidum (strain ATCC 49652 / DSM 12025 / NBRC 103806 / TLS) (Chlorobium tepidum).